A 703-amino-acid chain; its full sequence is Ion-translocating oxidoreductase complex subunit C (703 aa).

2 consecutive 4Fe-4S ferredoxin-type domains span residues 369 to 398 and 408 to 437; these read YDPQ…QQMY and KSNQ…IQYF. [4Fe-4S] cluster-binding residues include Cys-378, Cys-381, Cys-384, Cys-388, Cys-417, Cys-420, Cys-423, and Cys-427. 2 disordered regions span residues 467–542 and 555–680; these read RLER…PDNS and RQQT…PKKA. Positions 485–497 are enriched in basic and acidic residues; that stretch reads ARREELAANKGED. Residues 559–577 are compositionally biased toward low complexity; sequence NGNSPVSSASNSDSATISA. Polar residues predominate over residues 578-592; it reads DNTHSTPKTAQNQTA. Composition is skewed to low complexity over residues 598-629 and 641-669; these read AAVA…TEKT and AAVA…EKTA.

This sequence belongs to the 4Fe4S bacterial-type ferredoxin family. RnfC subfamily. The complex is composed of six subunits: RnfA, RnfB, RnfC, RnfD, RnfE and RnfG. It depends on [4Fe-4S] cluster as a cofactor.

It is found in the cell inner membrane. Functionally, part of a membrane-bound complex that couples electron transfer with translocation of ions across the membrane. The protein is Ion-translocating oxidoreductase complex subunit C of Actinobacillus succinogenes (strain ATCC 55618 / DSM 22257 / CCUG 43843 / 130Z).